The chain runs to 125 residues: Small ribosomal subunit protein uS13 (125 aa).

Positions 95–125 (GLPLRGQRTKTNARTRKGKRKTVANKKIASK) are disordered.

This sequence belongs to the universal ribosomal protein uS13 family. As to quaternary structure, part of the 30S ribosomal subunit. Forms a loose heterodimer with protein S19. Forms two bridges to the 50S subunit in the 70S ribosome.

Functionally, located at the top of the head of the 30S subunit, it contacts several helices of the 16S rRNA. In the 70S ribosome it contacts the 23S rRNA (bridge B1a) and protein L5 of the 50S subunit (bridge B1b), connecting the 2 subunits; these bridges are implicated in subunit movement. Contacts the tRNAs in the A and P-sites. The sequence is that of Small ribosomal subunit protein uS13 from Borreliella burgdorferi (strain ATCC 35210 / DSM 4680 / CIP 102532 / B31) (Borrelia burgdorferi).